The following is a 407-amino-acid chain: Endo-1,4-beta-xylanase (407 aa).

An N-terminal signal peptide occupies residues 1–28 (MRNVVRKPLTIGLALTLLLPMGMTATSA). The GH10 domain occupies 42–406 (ALNAPQLDQR…KPAYWAIIDH (365 aa)). Glu187 acts as the Proton donor in catalysis. Glu293 functions as the Nucleophile in the catalytic mechanism.

This sequence belongs to the glycosyl hydrolase 10 (cellulase F) family.

The protein localises to the secreted. It carries out the reaction Endohydrolysis of (1-&gt;4)-beta-D-xylosidic linkages in xylans.. Its pathway is glycan degradation; xylan degradation. In Geobacillus stearothermophilus (Bacillus stearothermophilus), this protein is Endo-1,4-beta-xylanase.